The chain runs to 1040 residues: Multidrug resistance protein MdtB (1040 aa).

12 helical membrane passes run 25–45, 347–367, 369–389, 396–416, 440–460, 472–492, 537–557, 863–883, 888–908, 910–930, 968–988, and 998–1018; these read LLMA…PVAA, LMLA…NIPA, IIPG…MVFL, LTLM…IVVI, IGFT…PLLF, FAVT…TLTP, WLTL…WIVI, LGST…VLGV, FIHP…ALLA, IIAG…LIGI, ILMT…STGV, and IAMV…TPVI.

It belongs to the resistance-nodulation-cell division (RND) (TC 2.A.6) family. MdtB subfamily. In terms of assembly, part of a tripartite efflux system composed of MdtA, MdtB and MdtC. MdtB forms a heteromultimer with MdtC.

Its subcellular location is the cell inner membrane. The protein is Multidrug resistance protein MdtB of Salmonella paratyphi B (strain ATCC BAA-1250 / SPB7).